A 54-amino-acid chain; its full sequence is UPF0391 membrane protein BAB1_1670 (54 aa).

The next 2 helical transmembrane spans lie at 5-25 (VLVF…GIAG) and 29-48 (GIAQ…SLIA).

The protein belongs to the UPF0391 family.

The protein localises to the cell membrane. This Brucella abortus (strain 2308) protein is UPF0391 membrane protein BAB1_1670.